The following is a 489-amino-acid chain: 3-octaprenyl-4-hydroxybenzoate carboxy-lyase (489 aa).

Asn-172 contributes to the Mn(2+) binding site. Residues 175 to 177 (IYR), 189 to 191 (RWL), and 194 to 195 (RG) contribute to the prenylated FMN site. Residue Glu-238 participates in Mn(2+) binding. Asp-287 serves as the catalytic Proton donor.

It belongs to the UbiD family. In terms of assembly, homohexamer. Prenylated FMN is required as a cofactor. Mn(2+) serves as cofactor.

The protein resides in the cell membrane. It catalyses the reaction a 4-hydroxy-3-(all-trans-polyprenyl)benzoate + H(+) = a 2-(all-trans-polyprenyl)phenol + CO2. It participates in cofactor biosynthesis; ubiquinone biosynthesis. Its function is as follows. Catalyzes the decarboxylation of 3-octaprenyl-4-hydroxy benzoate to 2-octaprenylphenol, an intermediate step in ubiquinone biosynthesis. The protein is 3-octaprenyl-4-hydroxybenzoate carboxy-lyase of Aeromonas salmonicida (strain A449).